A 283-amino-acid polypeptide reads, in one-letter code: MNNVIDGKALANEILSELKHEVQRLKDKTGESPKLAIVLVGDNPASIIYVKNKIKHANKIGIDTLLLNLPITIKTEDLIAKISELNLDQNVSGIIVQLPLPNSIDKNKILSAISPSKDVDGFHPLNVGYLHSGIDNGFVPCTALGCLEVIKKHEPNLSGKNAIIVGRSNIVGKPLSALLLKENCSVTICHSKSQNLSSITSKADIVVAAIGSPLKLTSGYFKPDAIVIDVGINRIGGNKIVGDVDFENVKSKVKYITPVPGGIGPMTIAFLLKNTVQAFKIYS.

NADP(+)-binding positions include 166–168, Ser-191, and Ile-232; that span reads GRS.

It belongs to the tetrahydrofolate dehydrogenase/cyclohydrolase family. As to quaternary structure, homodimer.

It carries out the reaction (6R)-5,10-methylene-5,6,7,8-tetrahydrofolate + NADP(+) = (6R)-5,10-methenyltetrahydrofolate + NADPH. The enzyme catalyses (6R)-5,10-methenyltetrahydrofolate + H2O = (6R)-10-formyltetrahydrofolate + H(+). It participates in one-carbon metabolism; tetrahydrofolate interconversion. Its function is as follows. Catalyzes the oxidation of 5,10-methylenetetrahydrofolate to 5,10-methenyltetrahydrofolate and then the hydrolysis of 5,10-methenyltetrahydrofolate to 10-formyltetrahydrofolate. This Rickettsia bellii (strain RML369-C) protein is Bifunctional protein FolD.